A 542-amino-acid chain; its full sequence is NXPE family member 4 (542 aa).

Positions 1–26 (MKMMASRKSLWVLLFIVIFWISFTVF) are cleaved as a signal peptide. 4 N-linked (GlcNAc...) asparagine glycosylation sites follow: asparagine 91, asparagine 92, asparagine 159, and asparagine 223.

The protein belongs to the NXPE family.

The protein resides in the secreted. The sequence is that of NXPE family member 4 (Nxpe4) from Rattus norvegicus (Rat).